We begin with the raw amino-acid sequence, 106 residues long: UPF0145 protein PputW619_2377 (106 aa).

It belongs to the UPF0145 family.

The chain is UPF0145 protein PputW619_2377 from Pseudomonas putida (strain W619).